The following is a 295-amino-acid chain: UDP-N-acetylenolpyruvoylglucosamine reductase (295 aa).

The 166-residue stretch at K23–G188 folds into the FAD-binding PCMH-type domain. R167 is an active-site residue. S217 functions as the Proton donor in the catalytic mechanism. E287 is an active-site residue.

The protein belongs to the MurB family. Requires FAD as cofactor.

The protein resides in the cytoplasm. It carries out the reaction UDP-N-acetyl-alpha-D-muramate + NADP(+) = UDP-N-acetyl-3-O-(1-carboxyvinyl)-alpha-D-glucosamine + NADPH + H(+). It functions in the pathway cell wall biogenesis; peptidoglycan biosynthesis. Functionally, cell wall formation. In Streptococcus pyogenes serotype M28 (strain MGAS6180), this protein is UDP-N-acetylenolpyruvoylglucosamine reductase.